A 159-amino-acid polypeptide reads, in one-letter code: Phosphopantetheine adenylyltransferase (159 aa).

A substrate-binding site is contributed by serine 8. ATP-binding positions include 8–9 (SF) and histidine 16. 3 residues coordinate substrate: lysine 40, threonine 72, and arginine 86. ATP-binding positions include 87–89 (GLR), glutamate 97, and 122–128 (HSFVSSS).

The protein belongs to the bacterial CoaD family. As to quaternary structure, homohexamer. Mg(2+) serves as cofactor.

It localises to the cytoplasm. It catalyses the reaction (R)-4'-phosphopantetheine + ATP + H(+) = 3'-dephospho-CoA + diphosphate. It participates in cofactor biosynthesis; coenzyme A biosynthesis; CoA from (R)-pantothenate: step 4/5. Functionally, reversibly transfers an adenylyl group from ATP to 4'-phosphopantetheine, yielding dephospho-CoA (dPCoA) and pyrophosphate. This chain is Phosphopantetheine adenylyltransferase, found in Synechococcus sp. (strain JA-3-3Ab) (Cyanobacteria bacterium Yellowstone A-Prime).